The sequence spans 341 residues: Dihydroorotate dehydrogenase (quinone) (341 aa).

Residues 61 to 65 and Thr-85 contribute to the FMN site; that span reads AGLDK. Lys-65 provides a ligand contact to substrate. 110-114 provides a ligand contact to substrate; that stretch reads NRMGF. Residues Asn-138 and Asn-171 each coordinate FMN. Asn-171 lines the substrate pocket. Ser-174 serves as the catalytic Nucleophile. Asn-176 is a substrate binding site. FMN is bound by residues Lys-216 and Thr-244. Residue 245-246 coordinates substrate; that stretch reads NT. FMN-binding positions include Gly-267, Gly-296, and 317–318; that span reads YS.

The protein belongs to the dihydroorotate dehydrogenase family. Type 2 subfamily. In terms of assembly, monomer. It depends on FMN as a cofactor.

The protein resides in the cell membrane. It catalyses the reaction (S)-dihydroorotate + a quinone = orotate + a quinol. It functions in the pathway pyrimidine metabolism; UMP biosynthesis via de novo pathway; orotate from (S)-dihydroorotate (quinone route): step 1/1. Functionally, catalyzes the conversion of dihydroorotate to orotate with quinone as electron acceptor. The chain is Dihydroorotate dehydrogenase (quinone) from Pseudomonas putida (strain W619).